The following is a 394-amino-acid chain: RAB6A-GEF complex partner protein 2 (394 aa).

This sequence belongs to the RGP1 family. Forms a complex with RIC1; the interaction enhances RAB6A GTPase activity. Interacts with RIC1. Interacts with RAB6A; the interaction is direct with a preference for RAB6A-GDP. Interacts with RAB33B.

It is found in the cytoplasm. The protein localises to the cytosol. Its subcellular location is the membrane. Its function is as follows. The RIC1-RGP1 complex acts as a guanine nucleotide exchange factor (GEF), which activates RAB6A by exchanging bound GDP for free GTP and may thereby required for efficient fusion of endosome-derived vesicles with the Golgi compartment. The RIC1-RGP1 complex participates in the recycling of mannose-6-phosphate receptors. The protein is RAB6A-GEF complex partner protein 2 of Bos taurus (Bovine).